A 541-amino-acid chain; its full sequence is MAKTIAYDEEARRGLERGLNALADAVKVTLGPKGRNVVLEKKWGAPTITNDGVSIAKEIELEDPYEKIGAELVKEVAKKTDDVAGDGTTTATVLAQALVREGLRNVAAGANPLGLKRGIEKAVEKVTETLLKSAKEVETKEQIAATAGISAGDQSIGDLIAEAMDKVGNEGVITVEESNTFGLQLELTEGMRFDKGYISGYFVTDAERQEAVLEDPYILLVSSKISTVKDLLPLLEKVIQSGKPLLIIAEDVEGEALSTLVVNKIRGTFKSVAVKAPGFGDRRKAMLQDMAILTGGQVISEEVGLSLETADISLLGQARKVVITKDETTIVEGAGDAEAIQGRVAQIRAEIENSDSDYDREKLQERLAKLAGGVAVIKAGAATEVELKERKHRIEDAVRNAKAAVEEGIVAGGGVALLQAAPSLEELNLTGDEATGANIVRVALEAPLKQIAFNGGLEPGVVAEKVRNSAAGTGLNAATGEYEDLLAAGVADPVKVTRSALQNAASIAALFLTTEAVVADKPEKSAAPAGDPTGGMGGMDF.

ATP is bound by residues 29–32 (TLGP), 86–90 (DGTTT), Gly413, 476–478 (NAA), and Asp492.

It belongs to the chaperonin (HSP60) family. Forms a cylinder of 14 subunits composed of two heptameric rings stacked back-to-back. Interacts with the co-chaperonin GroES.

The protein resides in the secreted. The protein localises to the capsule. Its subcellular location is the cell surface. It is found in the cell wall. It catalyses the reaction ATP + H2O + a folded polypeptide = ADP + phosphate + an unfolded polypeptide.. In terms of biological role, together with its co-chaperonin GroES, plays an essential role in assisting protein folding. The GroEL-GroES system forms a nano-cage that allows encapsulation of the non-native substrate proteins and provides a physical environment optimized to promote and accelerate protein folding. In Mycobacterium sp. (strain KMS), this protein is Chaperonin GroEL 2.